Consider the following 237-residue polypeptide: Putative N-acetylmannosamine-6-phosphate 2-epimerase (237 aa).

Belongs to the NanE family.

It catalyses the reaction an N-acyl-D-glucosamine 6-phosphate = an N-acyl-D-mannosamine 6-phosphate. It participates in amino-sugar metabolism; N-acetylneuraminate degradation; D-fructose 6-phosphate from N-acetylneuraminate: step 3/5. Its function is as follows. Converts N-acetylmannosamine-6-phosphate (ManNAc-6-P) to N-acetylglucosamine-6-phosphate (GlcNAc-6-P). The chain is Putative N-acetylmannosamine-6-phosphate 2-epimerase from Caldanaerobacter subterraneus subsp. tengcongensis (strain DSM 15242 / JCM 11007 / NBRC 100824 / MB4) (Thermoanaerobacter tengcongensis).